The chain runs to 209 residues: Redox-sensing transcriptional repressor Rex (209 aa).

Residues 16–55 (LYYRFIQNLSLSGKQRVSSAELSEAVKVDSATIRRDFSYF) constitute a DNA-binding region (H-T-H motif). 90-95 (GVGNLG) is a binding site for NAD(+).

Belongs to the transcriptional regulatory Rex family. As to quaternary structure, homodimer.

Its subcellular location is the cytoplasm. In terms of biological role, modulates transcription in response to changes in cellular NADH/NAD(+) redox state. This is Redox-sensing transcriptional repressor Rex from Bacillus cereus (strain ATCC 10987 / NRS 248).